Consider the following 175-residue polypeptide: Small ribosomal subunit protein uS5 (175 aa).

The 64-residue stretch at 11-74 (LSEVLVDVNR…QAAKKRMMKV (64 aa)) folds into the S5 DRBM domain.

Belongs to the universal ribosomal protein uS5 family. In terms of assembly, part of the 30S ribosomal subunit. Contacts proteins S4 and S8.

Its function is as follows. With S4 and S12 plays an important role in translational accuracy. Functionally, located at the back of the 30S subunit body where it stabilizes the conformation of the head with respect to the body. The protein is Small ribosomal subunit protein uS5 of Rickettsia prowazekii (strain Madrid E).